The primary structure comprises 1480 residues: MQRSPLEKASVVSKLFFSWTRPILRKGYRQRLELSDIYQIPSVDSADNLSEKLEREWDRELASKKNPKLINALRRCFFWRFMFYGIFLYLGEVTKAVQPLLLGRIIASYDPDNKEERSIAIYLGIGLCLLFIVRTLLLHPAIFGLHHIGMQMRIAMFSLIYKKTLKLSSRVLDKISIGQLVSLLSNNLNKFDEGLALAHFVWIAPLQVALLMGLIWELLQASAFCGLGFLIVLALFQAGLGRMMMKYRDQRAGKISERLVITSEMIENIQSVKAYCWEEAMEKMIENLRQTELKLTRKAAYVRYFNSSAFFFSGFFVVFLSVLPYALIKGIILRKIFTTISFCIVLRMAVTRQFPWAVQTWYDSLGAINKIQDFLQKQEYKTLEYNLTTTEVVMENVTAFWEEGFGELFEKAKQNNNNRKTSNGDDSLFFSNFSLLGTPVLKDINFKIERGQLLAVAGSTGAGKTSLLMVIMGELEPSEGKIKHSGRISFCSQFSWIMPGTIKENIIFGVSYDEYRYRSVIKACQLEEDISKFAEKDNIVLGEGGITLSGGQRARISLARAVYKDADLYLLDSPFGYLDVLTEKEIFESCVCKLMANKTRILVTSKMEHLKKADKILILHEGSSYFYGTFSELQNLQPDFSSKLMGCDSFDQFSAERRNSILTETLHRFSLEGDAPVSWTETKKQSFKQTGEFGEKRKNSILNPINSIRKFSIVQKTPLQMNGIEEDSDEPLERRLSLVPDSEQGEAILPRISVISTGPTLQARRRQSVLNLMTHSVNQGQNIHRKTTASTRKVSLAPQANLTELDIYSRRLSQETGLEISEEINEEDLKECFFDDMESIPAVTTWNTYLRYITVHKSLIFVLIWCLVIFLAEVAASLVVLWLLGNTPLQDKGNSTHSRNNSYAVIITSTSSYYVFYIYVGVADTLLAMGFFRGLPLVHTLITVSKILHHKMLHSVLQAPMSTLNTLKAGGILNRFSKDIAILDDLLPLTIFDFIQLLLIVIGAIAVVAVLQPYIFVATVPVIVAFIMLRAYFLQTSQQLKQLESEGRSPIFTHLVTSLKGLWTLRAFGRQPYFETLFHKALNLHTANWFLYLSTLRWFQMRIEMIFVIFFIAVTFISILTTGEGEGRVGIILTLAMNIMSTLQWAVNSSIDVDSLMRSVSRVFKFIDMPTEGKPTKSTKPYKNGQLSKVMIIENSHVKKDDIWPSGGQMTVKDLTAKYTEGGNAILENISFSISPGQRVGLLGRTGSGKSTLLSAFLRLLNTEGEIQIDGVSWDSITLQQWRKAFGVIPQKVFIFSGTFRKNLDPYEQWSDQEIWKVADEVGLRSVIEQFPGKLDFVLVDGGCVLSHGHKQLMCLARSVLSKAKILLLDEPSAHLDPVTYQIIRRTLKQAFADCTVILCEHRIEAMLECQQFLVIEENKVRQYDSIQKLLNERSLFRQAISPSDRVKLFPHRNSSKCKSKPQIAALKEETEEEVQDTRL.

Over 1-77 (MQRSPLEKAS…KLINALRRCF (77 aa)) the chain is Cytoplasmic. A helical transmembrane segment spans residues 78-98 (FWRFMFYGIFLYLGEVTKAVQ). The region spanning 81 to 365 (FMFYGIFLYL…WAVQTWYDSL (285 aa)) is the ABC transmembrane type-1 1 domain. Residues 99-122 (PLLLGRIIASYDPDNKEERSIAIY) lie on the Extracellular side of the membrane. The chain crosses the membrane as a helical span at residues 123–146 (LGIGLCLLFIVRTLLLHPAIFGLH). At 147–195 (HIGMQMRIAMFSLIYKKTLKLSSRVLDKISIGQLVSLLSNNLNKFDEGL) the chain is on the cytoplasmic side. The helical transmembrane segment at 196-216 (ALAHFVWIAPLQVALLMGLIW) threads the bilayer. Residues 217 to 222 (ELLQAS) are Extracellular-facing. Residues 223-243 (AFCGLGFLIVLALFQAGLGRM) traverse the membrane as a helical segment. Over 244 to 298 (MMKYRDQRAGKISERLVITSEMIENIQSVKAYCWEEAMEKMIENLRQTELKLTRK) the chain is Cytoplasmic. Residues 299 to 319 (AAYVRYFNSSAFFFSGFFVVF) traverse the membrane as a helical segment. Topologically, residues 320–339 (LSVLPYALIKGIILRKIFTT) are extracellular. The helical transmembrane segment at 340–358 (ISFCIVLRMAVTRQFPWAV) threads the bilayer. The Cytoplasmic portion of the chain corresponds to 359–858 (QTWYDSLGAI…YLRYITVHKS (500 aa)). ATP is bound by residues tryptophan 401, serine 434, 458 to 465 (GSTGAGKT), and glutamine 493. One can recognise an ABC transporter 1 domain in the interval 423–646 (NGDDSLFFSN…QPDFSSKLMG (224 aa)). The S-palmitoyl cysteine moiety is linked to residue cysteine 524. Phosphoserine is present on serine 549. Residues 654–831 (SAERRNSILT…EEINEEDLKE (178 aa)) form a disordered R region region. Residues serine 660 and serine 670 each carry the phosphoserine; by PKA modification. Serine 686 is modified (phosphoserine; by PKC). Lysine 688 is covalently cross-linked (Glycyl lysine isopeptide (Lys-Gly) (interchain with G-Cter in ubiquitin)). A phosphoserine; by PKA mark is found at serine 700 and serine 712. Threonine 717 carries the post-translational modification Phosphothreonine. 3 positions are modified to phosphoserine; by PKA: serine 737, serine 753, and serine 768. A Phosphoserine; by PKC modification is found at serine 790. Phosphoserine; by PKA occurs at positions 795 and 813. Residues 859-879 (LIFVLIWCLVIFLAEVAASLV) traverse the membrane as a helical segment. Positions 859–1155 (LIFVLIWCLV…AVNSSIDVDS (297 aa)) constitute an ABC transmembrane type-1 2 domain. Over 880 to 918 (VLWLLGNTPLQDKGNSTHSRNNSYAVIITSTSSYYVFYI) the chain is Extracellular. Asparagine 894 and asparagine 900 each carry an N-linked (GlcNAc...) asparagine glycan. A discontinuously helical transmembrane segment spans residues 919 to 939 (YVGVADTLLAMGFFRGLPLVH). The Cytoplasmic segment spans residues 940 to 990 (TLITVSKILHHKMLHSVLQAPMSTLNTLKAGGILNRFSKDIAILDDLLPLT). Residues 991 to 1011 (IFDFIQLLLIVIGAIAVVAVL) form a helical membrane-spanning segment. Topologically, residues 1012 to 1013 (QP) are extracellular. Residues 1014-1034 (YIFVATVPVIVAFIMLRAYFL) traverse the membrane as a helical segment. The Cytoplasmic segment spans residues 1035–1095 (QTSQQLKQLE…TANWFLYLST (61 aa)). Residues 1096 to 1116 (LRWFQMRIEMIFVIFFIAVTF) form a helical membrane-spanning segment. Over 1117-1130 (ISILTTGEGEGRVG) the chain is Extracellular. A helical membrane pass occupies residues 1131–1151 (IILTLAMNIMSTLQWAVNSSI). Over 1152–1480 (DVDSLMRSVS…TEEEVQDTRL (329 aa)) the chain is Cytoplasmic. Residues 1210 to 1443 (MTVKDLTAKY…RSLFRQAISP (234 aa)) form the ABC transporter 2 domain. Residues tyrosine 1219 and 1244–1251 (GRTGSGKS) each bind ATP. Positions 1386–1480 (RTLKQAFADC…TEEEVQDTRL (95 aa)) are interaction with GORASP2. Cysteine 1395 is lipidated: S-palmitoyl cysteine. Phosphoserine occurs at positions 1444 and 1456. The disordered stretch occupies residues 1452-1480 (HRNSSKCKSKPQIAALKEETEEEVQDTRL). Over residues 1470-1480 (ETEEEVQDTRL) the composition is skewed to acidic residues. Residues 1478–1480 (TRL) carry the PDZ-binding motif.

The protein belongs to the ABC transporter superfamily. ABCC family. CFTR transporter (TC 3.A.1.202) subfamily. As to quaternary structure, monomer; does not require oligomerization for channel activity. May form oligomers in the membrane. Interacts with SLC26A3, SLC26A6 and SHANK2. Interacts with NHERF1 and MYO6. Interacts (via C-terminus) with GOPC (via PDZ domain); this promotes CFTR internalization and thereby decreases channel activity. Interacts with SLC4A7 through NHERF1. Found in a complex with MYO5B and RAB11A. Interacts with ANO1. Interacts with SLC26A8. Interacts with AHCYL1; the interaction increases CFTR activity. Interacts with CSE1L. The core-glycosylated form interacts with GORASP2 (via PDZ GRASP-type 1 domain) in respone to ER stress. Interacts with MARCHF2; the interaction leads to CFTR ubiqtuitination and degradation. Interacts with ADGRG2. In terms of processing, N-glycosylated. Phosphorylated; cAMP treatment promotes phosphorylation and activates the channel. Dephosphorylation decreases the ATPase activity (in vitro). Phosphorylation at PKA sites activates the channel. Phosphorylation at PKC sites enhances the response to phosphorylation by PKA. Phosphorylated by AMPK; this inhibits channel activity. Post-translationally, ubiquitinated, leading to its degradation in the lysosome. Deubiquitination by USP10 in early endosomes enhances its endocytic recycling to the cell membrane. Ubiquitinated by RNF185 during ER stress. Ubiquitinated by MARCHF2. In terms of tissue distribution, expressed in the respiratory airway, including bronchial epithelium, and in the female reproductive tract, including oviduct (at protein level). Detected in pancreatic intercalated ducts in the exocrine tissue, on epithelial cells in intralobular striated ducts in sublingual salivary glands, on apical membranes of crypt cells throughout the small and large intestine, and on the reabsorptive duct in eccrine sweat glands. Detected on the equatorial segment of the sperm head (at protein level). Detected in nasal and bronchial superficial epithelium. Expressed by the central cells on the sebaceous glands, dermal adipocytes and, at lower levels, by epithelial cells.

Its subcellular location is the apical cell membrane. The protein localises to the early endosome membrane. It localises to the cell membrane. The protein resides in the recycling endosome membrane. It is found in the endoplasmic reticulum membrane. Its subcellular location is the nucleus. The enzyme catalyses ATP + H2O + closed Cl(-) channel = ADP + phosphate + open Cl(-) channel.. It catalyses the reaction chloride(in) = chloride(out). It carries out the reaction hydrogencarbonate(in) = hydrogencarbonate(out). The catalysed reaction is ATP + H2O = ADP + phosphate + H(+). Epithelial ion channel that plays an important role in the regulation of epithelial ion and water transport and fluid homeostasis. Mediates the transport of chloride ions across the cell membrane. Possesses an intrinsic ATPase activity and utilizes ATP to gate its channel; the passive flow of anions through the channel is gated by cycles of ATP binding and hydrolysis by the ATP-binding domains. The ion channel is also permeable to HCO(3)(-); selectivity depends on the extracellular chloride concentration. In vitro, mediates ATP-dependent glutathione flux. Exerts its function also by modulating the activity of other ion channels and transporters. Plays an important role in airway fluid homeostasis. Contributes to the regulation of the pH and the ion content of the airway surface fluid layer and thereby plays an important role in defense against pathogens. Modulates the activity of the epithelial sodium channel (ENaC) complex, in part by regulating the cell surface expression of the ENaC complex. Inhibits the activity of the ENaC channel containing subunits SCNN1A, SCNN1B and SCNN1G. Inhibits the activity of the ENaC channel containing subunits SCNN1D, SCNN1B and SCNN1G, but not of the ENaC channel containing subunits SCNN1A, SCNN1B and SCNN1G. May regulate bicarbonate secretion and salvage in epithelial cells by regulating the transporter SLC4A7. Can inhibit the chloride channel activity of ANO1. Plays a role in the chloride and bicarbonate homeostasis during sperm epididymal maturation and capacitation. The polypeptide is Cystic fibrosis transmembrane conductance regulator (Homo sapiens (Human)).